A 491-amino-acid polypeptide reads, in one-letter code: Cysteine--tRNA ligase (491 aa).

Residue Cys-31 coordinates Zn(2+). Positions 33–43 match the 'HIGH' region motif; it reads PTVYGDAHLGH. 3 residues coordinate Zn(2+): Cys-226, His-251, and Glu-255. The short motif at 283–287 is the 'KMSKS' region element; that stretch reads KMGKS. Lys-286 serves as a coordination point for ATP.

This sequence belongs to the class-I aminoacyl-tRNA synthetase family. In terms of assembly, monomer. It depends on Zn(2+) as a cofactor.

Its subcellular location is the cytoplasm. It carries out the reaction tRNA(Cys) + L-cysteine + ATP = L-cysteinyl-tRNA(Cys) + AMP + diphosphate. This Parabacteroides distasonis (strain ATCC 8503 / DSM 20701 / CIP 104284 / JCM 5825 / NCTC 11152) protein is Cysteine--tRNA ligase.